An 85-amino-acid polypeptide reads, in one-letter code: Large ribosomal subunit protein bL31B (85 aa).

The protein belongs to the bacterial ribosomal protein bL31 family. Type B subfamily. In terms of assembly, part of the 50S ribosomal subunit.

This chain is Large ribosomal subunit protein bL31B, found in Staphylococcus saprophyticus subsp. saprophyticus (strain ATCC 15305 / DSM 20229 / NCIMB 8711 / NCTC 7292 / S-41).